The following is a 211-amino-acid chain: Pyrrolidone-carboxylate peptidase 1 (211 aa).

Residues E79, C142, and H164 contribute to the active site.

Belongs to the peptidase C15 family. Homotetramer.

It is found in the cytoplasm. It carries out the reaction Release of an N-terminal pyroglutamyl group from a polypeptide, the second amino acid generally not being Pro.. In terms of biological role, removes 5-oxoproline from various penultimate amino acid residues except L-proline. In Saccharolobus solfataricus (strain ATCC 35092 / DSM 1617 / JCM 11322 / P2) (Sulfolobus solfataricus), this protein is Pyrrolidone-carboxylate peptidase 1 (pcp1).